The primary structure comprises 319 residues: Ferrochelatase (319 aa).

Residues His-194 and Glu-275 each contribute to the Fe cation site.

The protein belongs to the ferrochelatase family.

The protein localises to the cytoplasm. It catalyses the reaction heme b + 2 H(+) = protoporphyrin IX + Fe(2+). It functions in the pathway porphyrin-containing compound metabolism; protoheme biosynthesis; protoheme from protoporphyrin-IX: step 1/1. Its function is as follows. Catalyzes the ferrous insertion into protoporphyrin IX. This chain is Ferrochelatase, found in Vibrio vulnificus (strain YJ016).